Here is a 288-residue protein sequence, read N- to C-terminus: CBY1-interacting BAR domain-containing protein 2 (288 aa).

The interval 6–217 (SRDSQVRVME…ESYDLEKDLE (212 aa)) is BAR-like. Disordered stretches follow at residues 133–157 (QKSPSDRQTISQAETSVQRASVDAS) and 256–288 (TIRSQRKEAVSEDDSAEEDPVEDLRGQAQRLNQ). Polar residues predominate over residues 138–157 (DRQTISQAETSVQRASVDAS). The span at 266–276 (SEDDSAEEDPV) shows a compositional bias: acidic residues.

The protein belongs to the CIBAR family. Homodimer (via BAR-like domain). Heterodimer (via BAR-like domain) with FAM92A. Interacts with CBY1.

It localises to the cytoplasm. The protein resides in the cytoskeleton. It is found in the microtubule organizing center. The protein localises to the centrosome. Its subcellular location is the centriole. It localises to the cilium basal body. Its function is as follows. May play a role in ciliogenesis. In cooperation with CBY1 may facilitate ciliogenesis likely by the recruitment and fusion of endosomal vesicles at distal appendages during early stages of ciliogenesis. The polypeptide is CBY1-interacting BAR domain-containing protein 2 (CIBAR2) (Bos taurus (Bovine)).